Reading from the N-terminus, the 356-residue chain is MRKVLAIETSCDETSVSIVSNIGNTFKIHSNIIASQIEDHSKWGGVVPELAARKHLELLPFVLEKALTESKIKIEEVDYIASTVAPGLVGCLRVGSITARSLCMLHSKPFLGIHHLEGHLSSILFSENYPKKSFLTLLVSGGHTELIKVDDRRGMQRLGKSFDDAAGEAFDKVGRLLGLSYPGGPAIEKIAKNGDPMKFNLPKCRISDKKGGFLKYDFSFSGLKTAVLRLVEKINLDGKTVPVPDIAASFERVVAEVLVERTIRCAEDHSLDNVVVVGGVAANNTLRKMMISEANKKSIKVHLAPLNLCTDNAAMIGAAALFRIKFKDHLSSLKLGVSGRLSIEQANTLYEENPPF.

2 residues coordinate Fe cation: His-115 and His-119. Residues Leu-138–Gly-142, Asp-171, Gly-184, and Asn-283 contribute to the substrate site. Residue Asp-311 coordinates Fe cation.

It belongs to the KAE1 / TsaD family. Fe(2+) serves as cofactor.

The protein localises to the cytoplasm. It catalyses the reaction L-threonylcarbamoyladenylate + adenosine(37) in tRNA = N(6)-L-threonylcarbamoyladenosine(37) in tRNA + AMP + H(+). In terms of biological role, required for the formation of a threonylcarbamoyl group on adenosine at position 37 (t(6)A37) in tRNAs that read codons beginning with adenine. Is involved in the transfer of the threonylcarbamoyl moiety of threonylcarbamoyl-AMP (TC-AMP) to the N6 group of A37, together with TsaE and TsaB. TsaD likely plays a direct catalytic role in this reaction. The chain is tRNA N6-adenosine threonylcarbamoyltransferase from Prochlorococcus marinus (strain MIT 9312).